Here is a 337-residue protein sequence, read N- to C-terminus: Nucleoid-associated protein HS_0228 (337 aa).

Belongs to the YejK family.

The protein resides in the cytoplasm. The protein localises to the nucleoid. The protein is Nucleoid-associated protein HS_0228 of Histophilus somni (strain 129Pt) (Haemophilus somnus).